We begin with the raw amino-acid sequence, 577 residues long: MNIQALLSEKVRQAMIAAGAPADCEPQVRQSAKVQFGDYQANGMMAVAKKLGMAPRQLAEQVLTHLDLNGIASKVEIAGPGFINIFLDPAFLAEHVQQALASDRLGVATPEKQTIVVDYSAPNVAKEMHVGHLRSTIIGDAAVRTLEFLGHKVIRANHVGDWGTQFGMLIAWLEKQQQENAGEMELADLEGFYRDAKKHYDEDEEFAERARNYVVKLQSGDEYFREMWRKLVDITMTQNQITYDRLNVTLTRDDVMGESLYNPMLPGIVADLKAKGLAVESEGATVVFLDEFKNKEGEPMGVIIQKKDGGYLYTTTDIACAKYRYETLHADRVLYYIDSRQHQHLMQAWAIVRKAGYVPESVPLEHHMFGMMLGKDGKPFKTRAGGTVKLADLLDEALERARRLVAEKNPDMPADELEKLANAVGIGAVKYADLSKNRTTDYIFDWDNMLAFEGNTAPYMQYAYTRVLSVFRKAEIDEEQLAAAPVIIREDREAQLAARLLQFEETLTVVAREGTPHVMCAYLYDLAGLFSGFYEHCPILSAENEEVRNSRLKLAQLTAKTLKLGLDTLGIETVERM.

The 'HIGH' region signature appears at 122–132; it reads PNVAKEMHVGH.

It belongs to the class-I aminoacyl-tRNA synthetase family. In terms of assembly, monomer.

The protein localises to the cytoplasm. The enzyme catalyses tRNA(Arg) + L-arginine + ATP = L-arginyl-tRNA(Arg) + AMP + diphosphate. In Escherichia coli (strain K12 / MC4100 / BW2952), this protein is Arginine--tRNA ligase.